The chain runs to 20 residues: Citrate synthase (20 aa).

This sequence belongs to the citrate synthase family. Homohexamer.

The catalysed reaction is oxaloacetate + acetyl-CoA + H2O = citrate + CoA + H(+). It functions in the pathway carbohydrate metabolism; tricarboxylic acid cycle; isocitrate from oxaloacetate: step 1/2. With respect to regulation, allosterically inhibited by NADH. In Streptomyces hygroscopicus, this protein is Citrate synthase (gltA).